The primary structure comprises 213 residues: 3-oxoadipate CoA-transferase subunit B (213 aa).

The active site involves Glu50.

It belongs to the 3-oxoacid CoA-transferase subunit B family. As to quaternary structure, heterodimer.

The catalysed reaction is 3-oxoadipate + succinyl-CoA = 3-oxoadipyl-CoA + succinate. Its pathway is aromatic compound metabolism; beta-ketoadipate pathway; acetyl-CoA and succinyl-CoA from 3-oxoadipate: step 1/2. This is 3-oxoadipate CoA-transferase subunit B (pcaJ) from Pseudomonas putida (strain ATCC 47054 / DSM 6125 / CFBP 8728 / NCIMB 11950 / KT2440).